We begin with the raw amino-acid sequence, 517 residues long: Aldehyde dehydrogenase X, mitochondrial (517 aa).

Residues 1 to 17 (MLRFLAPRLLSLQGRTA) constitute a mitochondrion transit peptide. Lysine 51 bears the N6-acetyllysine mark. Lysine 52 bears the N6-acetyllysine; alternate mark. Lysine 52 carries the post-translational modification N6-succinyllysine; alternate. Lysine 81 is subject to N6-succinyllysine. 262-267 (GSTEVG) provides a ligand contact to NAD(+). Glutamate 285 functions as the Proton acceptor in the catalytic mechanism. Cysteine 319 acts as the Nucleophile in catalysis. Residues lysine 364, lysine 383, lysine 399, lysine 414, and lysine 426 each carry the N6-acetyllysine; alternate modification. Lysine 364, lysine 383, lysine 399, lysine 414, and lysine 426 each carry N6-succinyllysine; alternate. Position 429 is an N6-acetyllysine (lysine 429).

This sequence belongs to the aldehyde dehydrogenase family. In terms of assembly, homotetramer.

The protein localises to the mitochondrion matrix. The catalysed reaction is an aldehyde + NAD(+) + H2O = a carboxylate + NADH + 2 H(+). Its pathway is alcohol metabolism; ethanol degradation; acetate from ethanol: step 2/2. In terms of biological role, ALDHs play a major role in the detoxification of alcohol-derived acetaldehyde. They are involved in the metabolism of corticosteroids, biogenic amines, neurotransmitters, and lipid peroxidation. This Pongo abelii (Sumatran orangutan) protein is Aldehyde dehydrogenase X, mitochondrial (ALDH1B1).